Reading from the N-terminus, the 111-residue chain is Probable 4-amino-4-deoxy-L-arabinose-phosphoundecaprenol flippase subunit ArnE (111 aa).

Topologically, residues 1 to 35 (MIWLTLVFASLLSVAGQLCQKQATCFAAVNKRRKH) are cytoplasmic. A helical membrane pass occupies residues 36-56 (IVLWLGLALACLGLAMVLWLL). The region spanning 40 to 109 (LGLALACLGL…IIGGIVILGS (70 aa)) is the EamA domain. Topologically, residues 57-60 (VLQN) are periplasmic. A helical transmembrane segment spans residues 61-81 (VPVGIAYPMLSLNFVWVTLAA). The Cytoplasmic portion of the chain corresponds to 82–87 (VKLWHE). The chain crosses the membrane as a helical span at residues 88–108 (PVSLRHWCGVAFIIGGIVILG). The Periplasmic segment spans residues 109-111 (STV).

The protein belongs to the ArnE family. In terms of assembly, heterodimer of ArnE and ArnF.

It localises to the cell inner membrane. Its pathway is bacterial outer membrane biogenesis; lipopolysaccharide biosynthesis. Functionally, translocates 4-amino-4-deoxy-L-arabinose-phosphoundecaprenol (alpha-L-Ara4N-phosphoundecaprenol) from the cytoplasmic to the periplasmic side of the inner membrane. This is Probable 4-amino-4-deoxy-L-arabinose-phosphoundecaprenol flippase subunit ArnE from Escherichia coli (strain UTI89 / UPEC).